We begin with the raw amino-acid sequence, 543 residues long: MRVAASALLAGAASAAVAPQQQILKFPSSFSELKEDLWSKPLHNLEESLKSLTGEAKATWDEVATMYPESFDKAAFFSTPKPHTRKHDSEWDHIVKGADVQSVWVENAQGEKEREIDGKLEQFDLRVKKVDPSVLGVDKVKQYSGYLDDNEEDKHLFYWFFESRNDPKNDPVVLWLNGGPGCSSLMGLFMELGPASVMKDGKLKHNDYSWNANASVIFLDQPVNVGYSYSSGSVSNTVAAGKDIYALLTLFFKQFPEYSKQPFHISGESYAGHYIPVFASEILSHKKRNINLQSVLIGNGLTDGLTQYEYYRPMACGEGGWPAVLDESSCQAMDNAYPRCASLIENCYKSESVWSCVPASIYCNNAMIGPYQRTGQNVYDVRRPCGDNQLCYDEIDYISAFLNKKEVMKAVGAEVSSYDSCNFDINRNFLLQGDWMKPYHRVVPGLLEEIPVLVYAGDADYICNWLGNKAWTEALEWKGHEEYKKAEMKDFKIDGDGKKVGEVKSSGNFTFMKIHAGGHMVPFDQPEASLEMVNRWLSGEFWE.

An N-terminal signal peptide occupies residues 1–17 (MRVAASALLAGAASAAV). A propeptide spanning residues 18-128 (APQQQILKFP…KLEQFDLRVK (111 aa)) is cleaved from the precursor. Intrachain disulfides connect Cys-182–Cys-421, Cys-316–Cys-330, Cys-340–Cys-363, Cys-347–Cys-356, and Cys-385–Cys-391. Asn-213 carries N-linked (GlcNAc...) asparagine glycosylation. The active site involves Ser-269. Residue Asp-460 is part of the active site. The N-linked (GlcNAc...) asparagine glycan is linked to Asn-508. The active site involves His-519.

This sequence belongs to the peptidase S10 family.

Its subcellular location is the vacuole. The catalysed reaction is Release of a C-terminal amino acid with broad specificity.. In terms of biological role, vacuolar carboxypeptidase involved in degradation of small peptides. Digests preferentially peptides containing an aliphatic or hydrophobic residue in P1' position, as well as methionine, leucine or phenylalanine in P1 position of ester substrate. This chain is Carboxypeptidase Y homolog A (CPYA), found in Phaeosphaeria nodorum (strain SN15 / ATCC MYA-4574 / FGSC 10173) (Glume blotch fungus).